Here is a 161-residue protein sequence, read N- to C-terminus: Pro-corazonin (161 aa).

A signal peptide spans 1–20 (MMRLLLLPLFLFTLSMACMG). The residue at position 21 (Q21) is a Pyrrolidone carboxylic acid. Position 31 is an asparagine amide (N31). The propeptide occupies 70–161 (LERCLAQLQR…SGEPSVFGKH (92 aa)). 2 disordered regions span residues 93–125 (NANR…TPIQ) and 142–161 (VAGS…FGKH). Low complexity predominate over residues 102–117 (SDSGSSRNRANNNNEN).

This sequence belongs to the corazonin family.

The protein resides in the secreted. Cardioactive peptide. Corazonin is probably involved in the physiological regulation of the heart beat. Clock (Clk) and cycle (cyc) proteins negatively regulate Crz transcription in a cell-specific manner. This chain is Pro-corazonin, found in Drosophila pseudoobscura pseudoobscura (Fruit fly).